We begin with the raw amino-acid sequence, 160 residues long: SsrA-binding protein (160 aa).

Belongs to the SmpB family.

The protein localises to the cytoplasm. Functionally, required for rescue of stalled ribosomes mediated by trans-translation. Binds to transfer-messenger RNA (tmRNA), required for stable association of tmRNA with ribosomes. tmRNA and SmpB together mimic tRNA shape, replacing the anticodon stem-loop with SmpB. tmRNA is encoded by the ssrA gene; the 2 termini fold to resemble tRNA(Ala) and it encodes a 'tag peptide', a short internal open reading frame. During trans-translation Ala-aminoacylated tmRNA acts like a tRNA, entering the A-site of stalled ribosomes, displacing the stalled mRNA. The ribosome then switches to translate the ORF on the tmRNA; the nascent peptide is terminated with the 'tag peptide' encoded by the tmRNA and targeted for degradation. The ribosome is freed to recommence translation, which seems to be the essential function of trans-translation. The chain is SsrA-binding protein from Pasteurella multocida (strain Pm70).